A 710-amino-acid polypeptide reads, in one-letter code: Polyribonucleotide nucleotidyltransferase (710 aa).

The Mg(2+) site is built by D486 and D492. Residues 553–612 (PRFETIKIHPDKIRDIIGKGGATIRSITEETNSSIDIDDDGTVKVYADDNEALQAALNRI) form the KH domain. One can recognise an S1 motif domain in the interval 622-690 (GAIYEGTVVR…QRGRIKLSIK (69 aa)).

The protein belongs to the polyribonucleotide nucleotidyltransferase family. Component of the RNA degradosome, which is a multiprotein complex involved in RNA processing and mRNA degradation. The cofactor is Mg(2+).

The protein resides in the cytoplasm. It carries out the reaction RNA(n+1) + phosphate = RNA(n) + a ribonucleoside 5'-diphosphate. Functionally, involved in mRNA degradation. Catalyzes the phosphorolysis of single-stranded polyribonucleotides processively in the 3'- to 5'-direction. The polypeptide is Polyribonucleotide nucleotidyltransferase (Cellvibrio japonicus (strain Ueda107) (Pseudomonas fluorescens subsp. cellulosa)).